The primary structure comprises 166 residues: Regulatory protein RecX (166 aa).

Belongs to the RecX family.

The protein localises to the cytoplasm. Its function is as follows. Modulates RecA activity. The protein is Regulatory protein RecX of Shigella sonnei (strain Ss046).